A 430-amino-acid polypeptide reads, in one-letter code: Dihydrolipoyllysine-residue acetyltransferase component of pyruvate dehydrogenase complex (430 aa).

In terms of domain architecture, Lipoyl-binding spans Ala2 to Asp77. N6-lipoyllysine is present on Lys43. Residues Asp80–Arg122 are disordered. Basic and acidic residues predominate over residues Met84–Ala104. The 38-residue stretch at Lys125–Leu162 folds into the Peripheral subunit-binding (PSBD) domain. The tract at residues Gly164–Glu200 is disordered. The segment covering Ala177–Val192 has biased composition (low complexity). Residue His401 is part of the active site.

This sequence belongs to the 2-oxoacid dehydrogenase family. In terms of assembly, forms a 24-polypeptide structural core with octahedral symmetry. (R)-lipoate serves as cofactor.

The catalysed reaction is N(6)-[(R)-dihydrolipoyl]-L-lysyl-[protein] + acetyl-CoA = N(6)-[(R)-S(8)-acetyldihydrolipoyl]-L-lysyl-[protein] + CoA. In terms of biological role, the pyruvate dehydrogenase complex catalyzes the overall conversion of pyruvate to acetyl-CoA and CO(2). It contains multiple copies of three enzymatic components: pyruvate dehydrogenase (E1), dihydrolipoamide acetyltransferase (E2) and lipoamide dehydrogenase (E3). The sequence is that of Dihydrolipoyllysine-residue acetyltransferase component of pyruvate dehydrogenase complex (pdhC) from Staphylococcus aureus.